The following is a 382-amino-acid chain: Lysophosphatidylserine lipase ABHD12 (382 aa).

Over residues 1–12 (MRKRKGSADHDS) the composition is skewed to basic and acidic residues. Residues 1–45 (MRKRKGSADHDSSFTATLTDGSSDLKQCHKGTDADTDPGGSGKEM) are disordered. Residues 1–60 (MRKRKGSADHDSSFTATLTDGSSDLKQCHKGTDADTDPGGSGKEMGRRCRRGGLMWRLRR) are Cytoplasmic-facing. The span at 13-25 (SFTATLTDGSSDL) shows a compositional bias: polar residues. Residues 61–81 (ILIWLLGIYIAIPVIIKVCPS) traverse the membrane as a helical segment. At 82–382 (IQAKLVFLNF…DFLRAPHPHG (301 aa)) the chain is on the extracellular side. The N-linked (GlcNAc...) asparagine glycan is linked to N109. S232 (nucleophile) is an active-site residue. Active-site charge relay system residues include D319 and H358.

This sequence belongs to the serine esterase family. Ubiquitously expressed in adult tissues.

The protein resides in the endoplasmic reticulum membrane. The catalysed reaction is 1-(9Z-octadecenoyl)-sn-glycero-3-phospho-L-serine + H2O = sn-glycero-3-phospho-L-serine + (9Z)-octadecenoate + H(+). It catalyses the reaction 1-(9Z-octadecenoyl)-sn-glycero-3-phospho-(1'-sn-glycerol) + H2O = sn-glycero-3-phospho-(1'-sn-glycerol) + (9Z)-octadecenoate + H(+). It carries out the reaction 1-(9Z-octadecenoyl)-sn-glycero-3-phospho-(1D-myo-inositol) + H2O = sn-glycero-3-phospho-1D-myo-inositol + (9Z)-octadecenoate + H(+). The enzyme catalyses 1-(9Z-octadecenoyl)-sn-glycero-3-phosphoethanolamine + H2O = sn-glycero-3-phosphoethanolamine + (9Z)-octadecenoate + H(+). The catalysed reaction is 1-(9Z-octadecenoyl)-sn-glycero-3-phosphocholine + H2O = 1-(9Z-octadecenoyl)-sn-glycerol + phosphocholine + H(+). It catalyses the reaction 2-(9Z-octadecenoyl)-glycerol + H2O = glycerol + (9Z)-octadecenoate + H(+). It carries out the reaction 1-hexadecanoyl-sn-glycero-3-phospho-L-serine + H2O = sn-glycero-3-phospho-L-serine + hexadecanoate + H(+). The enzyme catalyses 2-(5Z,8Z,11Z,14Z-eicosatetraenoyl)-glycerol + H2O = glycerol + (5Z,8Z,11Z,14Z)-eicosatetraenoate + H(+). The catalysed reaction is Hydrolyzes glycerol monoesters of long-chain fatty acids.. It catalyses the reaction 1-decanoylglycerol + H2O = decanoate + glycerol + H(+). It carries out the reaction 1-dodecanoylglycerol + H2O = dodecanoate + glycerol + H(+). The enzyme catalyses 1-tetradecanoylglycerol + H2O = tetradecanoate + glycerol + H(+). The catalysed reaction is 2-hexadecanoylglycerol + H2O = glycerol + hexadecanoate + H(+). It catalyses the reaction 1-(9Z-octadecenoyl)-glycerol + H2O = glycerol + (9Z)-octadecenoate + H(+). It carries out the reaction 2-(9Z,12Z-octadecadienoyl)-glycerol + H2O = (9Z,12Z)-octadecadienoate + glycerol + H(+). The enzyme catalyses 1-(5Z,8Z,11Z,14Z-eicosatetraenoyl)-glycerol + H2O = glycerol + (5Z,8Z,11Z,14Z)-eicosatetraenoate + H(+). The catalysed reaction is 1-(9Z,12Z-octadecadienoyl)-glycerol + H2O = (9Z,12Z)-octadecadienoate + glycerol + H(+). It catalyses the reaction 1-hexadecanoylglycerol + H2O = glycerol + hexadecanoate + H(+). It carries out the reaction 1-octadecanoylglycerol + H2O = octadecanoate + glycerol + H(+). The enzyme catalyses 1-octadecanoyl-2-(9,10-epoxyoctadecanoyl)-sn-glycero-3-phospho-L-serine + H2O = 9,10-epoxyoctadecanoate + 1-octadecanoyl-sn-glycero-3-phosphoserine + H(+). The catalysed reaction is 1-octadecanoyl-2-(10-hydroxyoctadecanoyl)-sn-glycero-3-phospho-L-serine + H2O = 1-octadecanoyl-sn-glycero-3-phosphoserine + 10-hydroxyoctadecanoate + H(+). It catalyses the reaction 1-hexadecanoyl-2-(10-hydroxyoctadecanoyl)-sn-glycero-3-phospho-L-serine + H2O = 10-hydroxyoctadecanoate + 1-hexadecanoyl-sn-glycero-3-phospho-L-serine + H(+). Functionally, lysophosphatidylserine (LPS) lipase that mediates the hydrolysis of lysophosphatidylserine, a class of signaling lipids that regulates immunological and neurological processes. Represents a major lysophosphatidylserine lipase in the brain, thereby playing a key role in the central nervous system. Also able to hydrolyze oxidized phosphatidylserine; oxidized phosphatidylserine is produced in response to severe inflammatory stress and constitutes a proapoptotic 'eat me' signal. Also has monoacylglycerol (MAG) lipase activity: hydrolyzes 2-arachidonoylglycerol (2-AG), thereby acting as a regulator of endocannabinoid signaling pathways. Has a strong preference for very-long-chain lipid substrates; substrate specificity is likely due to improved catalysis and not improved substrate binding. This is Lysophosphatidylserine lipase ABHD12 from Danio rerio (Zebrafish).